The sequence spans 375 residues: Histidine biosynthesis bifunctional protein HisB (375 aa).

The tract at residues 1-168 is histidinol-phosphatase; it reads MTPILFVDRD…GIAHELADAP (168 aa). The active-site Nucleophile is D8. Residues D8, D10, and D128 each coordinate Mg(2+). The Proton donor role is filled by D10. The tract at residues 169–375 is imidazoleglycerol-phosphate dehydratase; the sequence is RRAVVQRNTK…SALPTTKGAL (207 aa).

It in the N-terminal section; belongs to the histidinol-phosphatase family. This sequence in the C-terminal section; belongs to the imidazoleglycerol-phosphate dehydratase family. Requires Mg(2+) as cofactor.

It is found in the cytoplasm. It carries out the reaction D-erythro-1-(imidazol-4-yl)glycerol 3-phosphate = 3-(imidazol-4-yl)-2-oxopropyl phosphate + H2O. It catalyses the reaction L-histidinol phosphate + H2O = L-histidinol + phosphate. It participates in amino-acid biosynthesis; L-histidine biosynthesis; L-histidine from 5-phospho-alpha-D-ribose 1-diphosphate: step 6/9. The protein operates within amino-acid biosynthesis; L-histidine biosynthesis; L-histidine from 5-phospho-alpha-D-ribose 1-diphosphate: step 8/9. The protein is Histidine biosynthesis bifunctional protein HisB of Xanthomonas oryzae pv. oryzae (strain MAFF 311018).